Reading from the N-terminus, the 34-residue chain is Potassium channel toxin alpha-KTx 6.13 (34 aa).

4 cysteine pairs are disulfide-bonded: C3-C24, C9-C29, C13-C31, and C19-C34. At C34 the chain carries Cysteine amide.

This sequence belongs to the short scorpion toxin superfamily. Potassium channel inhibitor family. Alpha-KTx 06 subfamily. As to expression, expressed by the venom gland.

It is found in the secreted. Functionally, antagonist of Kv1/KCNA potassium channels. Shows a weak interaction with muscle-type nicotinic acetylcholine receptors (nAChR), since it inhibits alpha-bungarotoxin binding to both muscle-type nAChR from T.californica (IC(50)=490 nM). This suggests it probably weakly inhibits nAChR. This is Potassium channel toxin alpha-KTx 6.13 from Heterometrus spinifer (Asia giant forest scorpion).